A 362-amino-acid chain; its full sequence is tRNA-specific 2-thiouridylase MnmA 3 (362 aa).

ATP is bound by residues G11 to S18 and M37. The active-site Nucleophile is C91. C91 and C188 are oxidised to a cystine. G115 is an ATP binding site. The interval K137 to Q139 is interaction with tRNA. C188 (cysteine persulfide intermediate) is an active-site residue. Residues R296–Y297 are interaction with tRNA.

This sequence belongs to the MnmA/TRMU family.

It localises to the cytoplasm. The enzyme catalyses S-sulfanyl-L-cysteinyl-[protein] + uridine(34) in tRNA + AH2 + ATP = 2-thiouridine(34) in tRNA + L-cysteinyl-[protein] + A + AMP + diphosphate + H(+). Its function is as follows. Catalyzes the 2-thiolation of uridine at the wobble position (U34) of tRNA, leading to the formation of s(2)U34. This Bacteroides fragilis (strain YCH46) protein is tRNA-specific 2-thiouridylase MnmA 3.